We begin with the raw amino-acid sequence, 220 residues long: Glutathione S-transferase U23 (220 aa).

The 80-residue stretch at 3–82 (EEIILLDYWA…YIDELWPDTN (80 aa)) folds into the GST N-terminal domain. Residues 13-14 (SM), 39-40 (NK), 53-54 (KI), and 66-67 (ES) each bind glutathione. Positions 88–208 (DPYQRAQARF…LPDSDKVLKS (121 aa)) constitute a GST C-terminal domain.

This sequence belongs to the GST superfamily. Tau family.

Its subcellular location is the cytoplasm. It is found in the cytosol. It catalyses the reaction RX + glutathione = an S-substituted glutathione + a halide anion + H(+). May be involved in the conjugation of reduced glutathione to a wide number of exogenous and endogenous hydrophobic electrophiles and have a detoxification role against certain herbicides. The protein is Glutathione S-transferase U23 (GSTU23) of Arabidopsis thaliana (Mouse-ear cress).